The following is a 918-amino-acid chain: Chaperone protein ClpC4, chloroplastic (918 aa).

An i region spans residues 266 to 515 (LMEYGTNLTK…RLRNAQCKPS (250 aa)). Residues 311-318 (GEPGVGKT) and 653-660 (GPTGVGKS) contribute to the ATP site. The II stretch occupies residues 579-774 (VTEDDVRHAI…LIVMTTNIGS (196 aa)).

The protein belongs to the ClpA/ClpB family. ClpC subfamily.

It is found in the plastid. It localises to the chloroplast. Functionally, molecular chaperone that may interact with a ClpP-like protease involved in degradation of denatured proteins in the chloroplast. In Oryza sativa subsp. japonica (Rice), this protein is Chaperone protein ClpC4, chloroplastic (CPLC4).